We begin with the raw amino-acid sequence, 477 residues long: MFKNVFANLQKVGKSLMLPVSVLPIAGILLGIGSAHFNFLPDILSQIMAQTGGSVFSNMPLIFAIGVALGFTNNDGVAALAAVVSYGILIQTLTAVEPIVLHTTIEVIKNKHLSDTGILGGIIAGAISAYMFNKFYRIQLPEYLGFFAGKRFVPIISGLSAILIGVILSLIWPPIGHGIQIFSKWAAYQNPILAFALYGLVERALVPFGLHHIWNVPFQMQIGEYTNSIGQVFHGDIARYMAGDSTAGNLSGGFIFKMYGLPGAALAIWHTSKKENKTKIGSIMISAALTAFLTGITEPIEFSFIIVAPVLYVIHAILAGLSFPLCIFLDMRAGTSFSHGFIDFIVLSGNSHHILLFPIIGILYGLLYYILFYLFIINFNLDTPGRENIKNNILEKDNNEIAPYIITALGGKNNIKNLDACITRLRITVSDISKVKQKDLKNIGAAGIIISGSGIQVVFGTRSENIKTAMDECIKNI.

The region spanning Met1 to Asn388 is the PTS EIIC type-1 domain. The next 10 helical transmembrane spans lie at Ser15–Ala35, Thr51–Phe71, Gly76–Val96, His112–Phe132, Phe152–Trp172, Pro191–His211, Leu250–His270, Ile280–Ile300, Phe304–Pro324, and Phe357–Ile377. The PTS EIIB type-1 domain occupies Asn399 to Ile477. Cys421 acts as the Phosphocysteine intermediate; for EIIB activity in catalysis. Residue Cys421 is modified to Phosphocysteine.

Its subcellular location is the cell inner membrane. It carries out the reaction N(pros)-phospho-L-histidyl-[protein] + D-glucose(out) = D-glucose 6-phosphate(in) + L-histidyl-[protein]. Functionally, the phosphoenolpyruvate-dependent sugar phosphotransferase system (sugar PTS), a major carbohydrate active transport system, catalyzes the phosphorylation of incoming sugar substrates concomitantly with their translocation across the cell membrane. The enzyme II complex composed of PtsG and Crr is involved in glucose transport. This chain is PTS system glucose-specific EIICB component (ptsG), found in Buchnera aphidicola subsp. Acyrthosiphon pisum (strain APS) (Acyrthosiphon pisum symbiotic bacterium).